A 474-amino-acid chain; its full sequence is Aspartyl/glutamyl-tRNA(Asn/Gln) amidotransferase subunit B (474 aa).

This sequence belongs to the GatB/GatE family. GatB subfamily. Heterotrimer of A, B and C subunits.

The enzyme catalyses L-glutamyl-tRNA(Gln) + L-glutamine + ATP + H2O = L-glutaminyl-tRNA(Gln) + L-glutamate + ADP + phosphate + H(+). The catalysed reaction is L-aspartyl-tRNA(Asn) + L-glutamine + ATP + H2O = L-asparaginyl-tRNA(Asn) + L-glutamate + ADP + phosphate + 2 H(+). In terms of biological role, allows the formation of correctly charged Asn-tRNA(Asn) or Gln-tRNA(Gln) through the transamidation of misacylated Asp-tRNA(Asn) or Glu-tRNA(Gln) in organisms which lack either or both of asparaginyl-tRNA or glutaminyl-tRNA synthetases. The reaction takes place in the presence of glutamine and ATP through an activated phospho-Asp-tRNA(Asn) or phospho-Glu-tRNA(Gln). The chain is Aspartyl/glutamyl-tRNA(Asn/Gln) amidotransferase subunit B from Helicobacter hepaticus (strain ATCC 51449 / 3B1).